The chain runs to 504 residues: D-alanine--D-alanyl carrier protein ligase (504 aa).

152 to 153 is a binding site for ATP; the sequence is TS. A D-alanine-binding site is contributed by Asp197. An ATP-binding site is contributed by 292 to 297; it reads NTYGPT. Residue Val301 coordinates D-alanine. Residues Asp383, 394–397, and Lys492 each bind ATP; that span reads YNGR. Lys492 serves as a coordination point for D-alanine.

This sequence belongs to the ATP-dependent AMP-binding enzyme family. DltA subfamily.

Its subcellular location is the cytoplasm. The catalysed reaction is holo-[D-alanyl-carrier protein] + D-alanine + ATP = D-alanyl-[D-alanyl-carrier protein] + AMP + diphosphate. The protein operates within cell wall biogenesis; lipoteichoic acid biosynthesis. Functionally, catalyzes the first step in the D-alanylation of lipoteichoic acid (LTA), the activation of D-alanine and its transfer onto the D-alanyl carrier protein (Dcp) DltC. In an ATP-dependent two-step reaction, forms a high energy D-alanyl-AMP intermediate, followed by transfer of the D-alanyl residue as a thiol ester to the phosphopantheinyl prosthetic group of the Dcp. D-alanylation of LTA plays an important role in modulating the properties of the cell wall in Gram-positive bacteria, influencing the net charge of the cell wall. The sequence is that of D-alanine--D-alanyl carrier protein ligase from Bacillus cereus (strain ZK / E33L).